The following is a 358-amino-acid chain: MKFLDEAKVYIRSGDGGNGCVAFRREKFIEFGGPSGGNGGRGGDVIVEVADGLNTLIDYRYQQHFKAPKGANGMGSDRHGANGKAIVLKVPLGTQIIDEDRETLIHDFTRVGERLVLAEGGNGGFGNAHFKSSTNRAPRRANPGQPGEERWIWLRLKLIADAGLVGLPNAGKSTFLSKVSAAKPKIADYPFTTLHPQLGVVRVQDREFVLADIPGLIEGAHEGAGLGDRFLGHVERCRVLLHLVDAGCDHAGRAYKIVRGEMEAYAGALAEKVEIVALNKIDAVTAEDLKKQRDRLKRAAKKTPLLVSGVTGEGVQDVLRALVEVIGQAPVSDKAKGADASAAQAMETPVARAKPWSP.

The region spanning 1–159 (MKFLDEAKVY…RWIWLRLKLI (159 aa)) is the Obg domain. The 168-residue stretch at 160-327 (ADAGLVGLPN…VLRALVEVIG (168 aa)) folds into the OBG-type G domain. Residues 166–173 (GLPNAGKS), 191–195 (FTTLH), 212–215 (DIPG), 279–282 (NKID), and 308–310 (SGV) contribute to the GTP site. S173 and T193 together coordinate Mg(2+). A disordered region spans residues 335 to 358 (AKGADASAAQAMETPVARAKPWSP).

This sequence belongs to the TRAFAC class OBG-HflX-like GTPase superfamily. OBG GTPase family. Monomer. It depends on Mg(2+) as a cofactor.

The protein resides in the cytoplasm. Functionally, an essential GTPase which binds GTP, GDP and possibly (p)ppGpp with moderate affinity, with high nucleotide exchange rates and a fairly low GTP hydrolysis rate. Plays a role in control of the cell cycle, stress response, ribosome biogenesis and in those bacteria that undergo differentiation, in morphogenesis control. The polypeptide is GTPase Obg (Nitrobacter winogradskyi (strain ATCC 25391 / DSM 10237 / CIP 104748 / NCIMB 11846 / Nb-255)).